A 201-amino-acid chain; its full sequence is 3-isopropylmalate dehydratase small subunit (201 aa).

Belongs to the LeuD family. LeuD type 1 subfamily. As to quaternary structure, heterodimer of LeuC and LeuD.

It catalyses the reaction (2R,3S)-3-isopropylmalate = (2S)-2-isopropylmalate. It participates in amino-acid biosynthesis; L-leucine biosynthesis; L-leucine from 3-methyl-2-oxobutanoate: step 2/4. Functionally, catalyzes the isomerization between 2-isopropylmalate and 3-isopropylmalate, via the formation of 2-isopropylmaleate. This chain is 3-isopropylmalate dehydratase small subunit, found in Thermus thermophilus (strain ATCC BAA-163 / DSM 7039 / HB27).